Consider the following 158-residue polypeptide: Small ribosomal subunit protein uS7 (158 aa).

It belongs to the universal ribosomal protein uS7 family. As to quaternary structure, part of the 30S ribosomal subunit. Contacts proteins S9 and S11.

Its function is as follows. One of the primary rRNA binding proteins, it binds directly to 16S rRNA where it nucleates assembly of the head domain of the 30S subunit. Is located at the subunit interface close to the decoding center, probably blocks exit of the E-site tRNA. This chain is Small ribosomal subunit protein uS7, found in Parabacteroides distasonis (strain ATCC 8503 / DSM 20701 / CIP 104284 / JCM 5825 / NCTC 11152).